The primary structure comprises 414 residues: 3-phosphoshikimate 1-carboxyvinyltransferase (414 aa).

Positions 20, 21, and 25 each coordinate 3-phosphoshikimate. Phosphoenolpyruvate is bound at residue lysine 20. Positions 85 and 113 each coordinate phosphoenolpyruvate. The 3-phosphoshikimate site is built by serine 154, serine 155, glutamine 156, serine 181, aspartate 296, and lysine 323. Glutamine 156 contacts phosphoenolpyruvate. Catalysis depends on aspartate 296, which acts as the Proton acceptor. Arginine 327, arginine 371, and lysine 395 together coordinate phosphoenolpyruvate.

This sequence belongs to the EPSP synthase family. Monomer.

Its subcellular location is the cytoplasm. It catalyses the reaction 3-phosphoshikimate + phosphoenolpyruvate = 5-O-(1-carboxyvinyl)-3-phosphoshikimate + phosphate. It participates in metabolic intermediate biosynthesis; chorismate biosynthesis. Catalyzes the transfer of the enolpyruvyl moiety of phosphoenolpyruvate (PEP) to the 5-hydroxyl of shikimate-3-phosphate (S3P) to produce enolpyruvyl shikimate-3-phosphate and inorganic phosphate. The polypeptide is 3-phosphoshikimate 1-carboxyvinyltransferase (Saccharolobus islandicus (strain Y.G.57.14 / Yellowstone #1) (Sulfolobus islandicus)).